A 585-amino-acid polypeptide reads, in one-letter code: Arginine--tRNA ligase (585 aa).

The 'HIGH' region signature appears at 127–137 (PNTNKPLHVGH).

This sequence belongs to the class-I aminoacyl-tRNA synthetase family. Monomer.

It localises to the cytoplasm. The catalysed reaction is tRNA(Arg) + L-arginine + ATP = L-arginyl-tRNA(Arg) + AMP + diphosphate. The polypeptide is Arginine--tRNA ligase (Borreliella afzelii (strain PKo) (Borrelia afzelii)).